We begin with the raw amino-acid sequence, 194 residues long: Phosphoheptose isomerase (194 aa).

Residues 37-194 form the SIS domain; sequence IANSFKQGGK…LIEFEMAKTA (158 aa). 52 to 54 contacts substrate; sequence NGG. H61 and E65 together coordinate Zn(2+). Residues E65, 93–94, 119–121, S124, and Q172 each bind substrate; these read ND and STS. 2 residues coordinate Zn(2+): Q172 and H180.

This sequence belongs to the SIS family. GmhA subfamily. In terms of assembly, homotetramer. Requires Zn(2+) as cofactor.

The protein localises to the cytoplasm. The catalysed reaction is 2 D-sedoheptulose 7-phosphate = D-glycero-alpha-D-manno-heptose 7-phosphate + D-glycero-beta-D-manno-heptose 7-phosphate. It functions in the pathway carbohydrate biosynthesis; D-glycero-D-manno-heptose 7-phosphate biosynthesis; D-glycero-alpha-D-manno-heptose 7-phosphate and D-glycero-beta-D-manno-heptose 7-phosphate from sedoheptulose 7-phosphate: step 1/1. It participates in bacterial outer membrane biogenesis; LOS core biosynthesis. In terms of biological role, catalyzes the isomerization of sedoheptulose 7-phosphate in D-glycero-D-manno-heptose 7-phosphate. The sequence is that of Phosphoheptose isomerase from Haemophilus ducreyi (strain 35000HP / ATCC 700724).